Reading from the N-terminus, the 164-residue chain is MTQVDYTRAAKYFLLQDFWVGMKLGMKYFFAPKATLNYPHEKGPLSPRFRGEHALRRYPNGEERCIACKLCEAVCPAQAITIDAEPRDDGSRRTTRYDIDMTKCIYCGFCEEACPVDAIVEGPNFEFSTETREELYYDKDRLLANGERWEAEIARNLEMDAPYR.

4Fe-4S ferredoxin-type domains lie at 55 to 85 (LRRY…IDAE) and 95 to 124 (TRYD…EGPN). [4Fe-4S] cluster-binding residues include C65, C68, C71, C75, C104, C107, C110, and C114.

The protein belongs to the complex I 23 kDa subunit family. In terms of assembly, NDH-1 is composed of 14 different subunits. Subunits NuoA, H, J, K, L, M, N constitute the membrane sector of the complex. [4Fe-4S] cluster serves as cofactor.

The protein localises to the cell inner membrane. The enzyme catalyses a quinone + NADH + 5 H(+)(in) = a quinol + NAD(+) + 4 H(+)(out). NDH-1 shuttles electrons from NADH, via FMN and iron-sulfur (Fe-S) centers, to quinones in the respiratory chain. The immediate electron acceptor for the enzyme in this species is believed to be ubiquinone. Couples the redox reaction to proton translocation (for every two electrons transferred, four hydrogen ions are translocated across the cytoplasmic membrane), and thus conserves the redox energy in a proton gradient. The protein is NADH-quinone oxidoreductase subunit I of Roseobacter denitrificans (strain ATCC 33942 / OCh 114) (Erythrobacter sp. (strain OCh 114)).